Consider the following 362-residue polypeptide: Bifunctional nitrilase/nitrile hydratase NIT4 (362 aa).

Residues 31–307 form the CN hydrolase domain; it reads VRATVVQAST…EALITADLDL (277 aa). The Proton acceptor role is filled by E71. K162 serves as the catalytic Proton donor. The Nucleophile role is filled by C196.

It belongs to the carbon-nitrogen hydrolase superfamily. Nitrilase family.

The enzyme catalyses a nitrile + 2 H2O = a carboxylate + NH4(+). It catalyses the reaction 3-cyano-L-alanine + 2 H2O = L-aspartate + NH4(+). In terms of biological role, highly specific for beta-cyano-L-alanine (Ala(CN)). Low activity with 3-phenylpropionitrile (PPN). Not associated with auxin production but may be involved in cyanide detoxification. The chain is Bifunctional nitrilase/nitrile hydratase NIT4 (NIT4) from Oryza sativa subsp. japonica (Rice).